The chain runs to 446 residues: Exodeoxyribonuclease 7 large subunit (446 aa).

This sequence belongs to the XseA family. As to quaternary structure, heterooligomer composed of large and small subunits.

The protein localises to the cytoplasm. The enzyme catalyses Exonucleolytic cleavage in either 5'- to 3'- or 3'- to 5'-direction to yield nucleoside 5'-phosphates.. Bidirectionally degrades single-stranded DNA into large acid-insoluble oligonucleotides, which are then degraded further into small acid-soluble oligonucleotides. The chain is Exodeoxyribonuclease 7 large subunit from Streptococcus pyogenes serotype M49 (strain NZ131).